The following is a 54-amino-acid chain: Putative neurotoxin-I (54 aa).

Intrachain disulfides connect Cys-20-Cys-42, Cys-28-Cys-51, and Cys-32-Cys-53.

In terms of tissue distribution, expressed by the venom gland.

The protein resides in the secreted. The chain is Putative neurotoxin-I from Lychas mucronatus (Chinese swimming scorpion).